Here is a 147-residue protein sequence, read N- to C-terminus: Protein phosphatase 1 regulatory subunit 14A (147 aa).

The span at 1–11 (MAAQRLGKRVL) shows a compositional bias: basic residues. A disordered region spans residues 1–37 (MAAQRLGKRVLSKLQSPSRARGPGGSPSGLQKRHARV). Serine 26 carries the post-translational modification Phosphoserine. The inhibitory stretch occupies residues 35 to 120 (ARVTVKYDRR…LLAKLRGLHK (86 aa)). Threonine 38 is subject to Phosphothreonine. A disordered region spans residues 118-147 (LHKQPGFPQPSPSDDPSLSPRQDPAHTAPP). Phosphoserine occurs at positions 128, 134, and 136.

This sequence belongs to the PP1 inhibitor family.

Its subcellular location is the cytoplasm. Its function is as follows. Inhibitor of PPP1CA. Has over 1000-fold higher inhibitory activity when phosphorylated, creating a molecular switch for regulating the phosphorylation status of PPP1CA substrates and smooth muscle contraction. The chain is Protein phosphatase 1 regulatory subunit 14A (Ppp1r14a) from Rattus norvegicus (Rat).